The primary structure comprises 240 residues: MATLFIADLHLCVEEPAITAGFLRFLAGEARKADALYILGDLFEAWIGDDDPNPLHRQMAAAIKAVSDSGVPCYFIHGNRDFLLGKRFARESGMTLLPEEKVLELYGRRVLIMHGDTLCTDDAGYQAFRAKVHKPWLQTLFLALPLFVRKRIAARMRANSKEANSSKSLAIMDVNQNAVVSAMEKHQVQWLIHGHTHRPAVHELIANQQPAFRVVLGAWHTEGSMVKVTADDVELIHFPF.

5 residues coordinate Mn(2+): Asp-8, His-10, Asp-41, Asn-79, and His-114. 79–80 (NR) contacts substrate. Asp-122, Ser-160, Asn-164, Lys-167, and His-195 together coordinate substrate. The Mn(2+) site is built by His-195 and His-197.

It belongs to the LpxH family. Mn(2+) serves as cofactor.

It is found in the cell inner membrane. It catalyses the reaction UDP-2-N,3-O-bis[(3R)-3-hydroxytetradecanoyl]-alpha-D-glucosamine + H2O = 2-N,3-O-bis[(3R)-3-hydroxytetradecanoyl]-alpha-D-glucosaminyl 1-phosphate + UMP + 2 H(+). Its pathway is glycolipid biosynthesis; lipid IV(A) biosynthesis; lipid IV(A) from (3R)-3-hydroxytetradecanoyl-[acyl-carrier-protein] and UDP-N-acetyl-alpha-D-glucosamine: step 4/6. Functionally, hydrolyzes the pyrophosphate bond of UDP-2,3-diacylglucosamine to yield 2,3-diacylglucosamine 1-phosphate (lipid X) and UMP by catalyzing the attack of water at the alpha-P atom. Involved in the biosynthesis of lipid A, a phosphorylated glycolipid that anchors the lipopolysaccharide to the outer membrane of the cell. The protein is UDP-2,3-diacylglucosamine hydrolase of Escherichia coli (strain SE11).